Reading from the N-terminus, the 308-residue chain is MSWLEKILEKSNLVSSRKASIPEGVWTKCTSCEQVLYHAELERNLEVCPKCNHHMRMKARRRLETFLDEGNRVELGTELEPQDKLKFKDSKRYKERISAAQKSSGEKDALIVMQGELLGMPLVACAFEFSFMGGSMGSVVGARFVKAVEAAIENNCALVCFSASGGARMQEALMSLMQMAKTSAALERLSEKGLPFISVLTDPTMGGVSASLAMLGDINIGEPKALIGFAGRRVIEQTVREDLPEGFQRSEFLLEHGAIDMIVDRREMRQRVGGLIAKMTNHKSPLVVSVNESPNEEPYSVPEVDEKG.

The CoA carboxyltransferase N-terminal domain occupies 25–294 (VWTKCTSCEQ…PLVVSVNESP (270 aa)). The Zn(2+) site is built by cysteine 29, cysteine 32, cysteine 48, and cysteine 51. The C4-type zinc finger occupies 29–51 (CTSCEQVLYHAELERNLEVCPKC). Residues 288–308 (VSVNESPNEEPYSVPEVDEKG) are disordered.

Belongs to the AccD/PCCB family. Acetyl-CoA carboxylase is a heterohexamer composed of biotin carboxyl carrier protein (AccB), biotin carboxylase (AccC) and two subunits each of ACCase subunit alpha (AccA) and ACCase subunit beta (AccD). Requires Zn(2+) as cofactor.

The protein resides in the cytoplasm. The enzyme catalyses N(6)-carboxybiotinyl-L-lysyl-[protein] + acetyl-CoA = N(6)-biotinyl-L-lysyl-[protein] + malonyl-CoA. The protein operates within lipid metabolism; malonyl-CoA biosynthesis; malonyl-CoA from acetyl-CoA: step 1/1. Its function is as follows. Component of the acetyl coenzyme A carboxylase (ACC) complex. Biotin carboxylase (BC) catalyzes the carboxylation of biotin on its carrier protein (BCCP) and then the CO(2) group is transferred by the transcarboxylase to acetyl-CoA to form malonyl-CoA. This is Acetyl-coenzyme A carboxylase carboxyl transferase subunit beta 1 from Vibrio parahaemolyticus serotype O3:K6 (strain RIMD 2210633).